The chain runs to 360 residues: Uroporphyrinogen decarboxylase (360 aa).

Residues 31–35 (RQAGR), Asp81, Tyr157, Thr212, and His333 each bind substrate.

The protein belongs to the uroporphyrinogen decarboxylase family. Homodimer.

It localises to the cytoplasm. It carries out the reaction uroporphyrinogen III + 4 H(+) = coproporphyrinogen III + 4 CO2. The protein operates within porphyrin-containing compound metabolism; protoporphyrin-IX biosynthesis; coproporphyrinogen-III from 5-aminolevulinate: step 4/4. In terms of biological role, catalyzes the decarboxylation of four acetate groups of uroporphyrinogen-III to yield coproporphyrinogen-III. The polypeptide is Uroporphyrinogen decarboxylase (Janthinobacterium sp. (strain Marseille) (Minibacterium massiliensis)).